The sequence spans 440 residues: Trigger factor (440 aa).

A PPIase FKBP-type domain is found at 163–248 (NDTVSINFKG…INSIKEKVLP (86 aa)).

The protein belongs to the FKBP-type PPIase family. Tig subfamily.

It localises to the cytoplasm. The enzyme catalyses [protein]-peptidylproline (omega=180) = [protein]-peptidylproline (omega=0). Its function is as follows. Involved in protein export. Acts as a chaperone by maintaining the newly synthesized protein in an open conformation. Functions as a peptidyl-prolyl cis-trans isomerase. This is Trigger factor from Finegoldia magna (strain ATCC 29328 / DSM 20472 / WAL 2508) (Peptostreptococcus magnus).